Consider the following 215-residue polypeptide: Cytochrome b6 (215 aa).

The helical transmembrane segment at 32–52 threads the bilayer; the sequence is IFYCLGGITLTCFLVQVATGF. Residue cysteine 35 participates in heme c binding. Positions 86 and 100 each coordinate heme b. The next 3 helical transmembrane spans lie at 90–110, 116–136, and 186–206; these read ASMM…TGGF, LTWV…VTGY, and LHTF…FLMI. Heme b-binding residues include histidine 187 and histidine 202.

It belongs to the cytochrome b family. PetB subfamily. The 4 large subunits of the cytochrome b6-f complex are cytochrome b6, subunit IV (17 kDa polypeptide, PetD), cytochrome f and the Rieske protein, while the 4 small subunits are PetG, PetL, PetM and PetN. The complex functions as a dimer. The cofactor is heme b. It depends on heme c as a cofactor.

The protein resides in the plastid. Its subcellular location is the chloroplast thylakoid membrane. In terms of biological role, component of the cytochrome b6-f complex, which mediates electron transfer between photosystem II (PSII) and photosystem I (PSI), cyclic electron flow around PSI, and state transitions. This Gossypium barbadense (Sea Island cotton) protein is Cytochrome b6.